We begin with the raw amino-acid sequence, 159 residues long: 6,7-dimethyl-8-ribityllumazine synthase (159 aa).

5-amino-6-(D-ribitylamino)uracil is bound by residues tryptophan 26, 57–59, and 79–81; these read ALE and CVI. A (2S)-2-hydroxy-3-oxobutyl phosphate-binding site is contributed by 84 to 85; that stretch reads GT. Histidine 87 (proton donor) is an active-site residue. Asparagine 112 contributes to the 5-amino-6-(D-ribitylamino)uracil binding site. Residue arginine 126 participates in (2S)-2-hydroxy-3-oxobutyl phosphate binding.

This sequence belongs to the DMRL synthase family.

The enzyme catalyses (2S)-2-hydroxy-3-oxobutyl phosphate + 5-amino-6-(D-ribitylamino)uracil = 6,7-dimethyl-8-(1-D-ribityl)lumazine + phosphate + 2 H2O + H(+). Its pathway is cofactor biosynthesis; riboflavin biosynthesis; riboflavin from 2-hydroxy-3-oxobutyl phosphate and 5-amino-6-(D-ribitylamino)uracil: step 1/2. In terms of biological role, catalyzes the formation of 6,7-dimethyl-8-ribityllumazine by condensation of 5-amino-6-(D-ribitylamino)uracil with 3,4-dihydroxy-2-butanone 4-phosphate. This is the penultimate step in the biosynthesis of riboflavin. The protein is 6,7-dimethyl-8-ribityllumazine synthase of Corynebacterium efficiens (strain DSM 44549 / YS-314 / AJ 12310 / JCM 11189 / NBRC 100395).